A 257-amino-acid chain; its full sequence is Beta-fibrinogenase mucrofibrase-5 (257 aa).

A signal peptide spans 1–18 (MVLIRVLANLLILQLSYA). The propeptide occupies 19 to 24 (QKSSEL). One can recognise a Peptidase S1 domain in the interval 25–248 (IIGGDECNIN…HLDWIKGIIA (224 aa)). Disulfide bonds link Cys-31-Cys-162, Cys-49-Cys-65, Cys-97-Cys-255, Cys-141-Cys-209, Cys-173-Cys-188, and Cys-199-Cys-224. Catalysis depends on His-64, which acts as the Charge relay system. The N-linked (GlcNAc...) asparagine glycan is linked to Asn-102. Residue Asp-109 is the Charge relay system of the active site. The Charge relay system role is filled by Ser-203.

Belongs to the peptidase S1 family. Snake venom subfamily. As to quaternary structure, monomer. As to expression, expressed by the venom gland.

Its subcellular location is the secreted. Snake venom serine protease with strong beta-fibrinogenolytic activities, angiotensin I (AGT)-degrading activities and strong kallikrein-like activities in vitro, releasing bradykinin from kininogen (KNG1). Intravenous injection mildly lowers blood pressure in experimental rats, which may be explained by the action on angiotensin I and kininogen. Exhibits amidase activity against N-benzoyl-Pro-Phe-Arg-p-nitroanilide in vitro. The chain is Beta-fibrinogenase mucrofibrase-5 from Protobothrops mucrosquamatus (Taiwan habu).